Here is a 472-residue protein sequence, read N- to C-terminus: Uronate isomerase (472 aa).

It belongs to the metallo-dependent hydrolases superfamily. Uronate isomerase family.

It catalyses the reaction D-glucuronate = D-fructuronate. It carries out the reaction aldehydo-D-galacturonate = keto-D-tagaturonate. It participates in carbohydrate metabolism; pentose and glucuronate interconversion. This is Uronate isomerase from Xanthomonas euvesicatoria pv. vesicatoria (strain 85-10) (Xanthomonas campestris pv. vesicatoria).